The chain runs to 642 residues: MDQKTTGLRENYGHRRQPALGKAMPVTALLLNLESNPLDYSRNDIGAELLEDDDKPPQLFSVTDEPPSPNEEDYKPPNHHEDDGKLAGERHREIPCSNCLKTAPGHLIDRQSAINEMCQRLCGPECRRPQGLTLDGVRQDFLRQYEIAEAVAKTSAMTSTVQMKQRLAARKLEFEKEMEMDEQLGVASPRNDINLGQSSTVAATGMGEFEFEPPRDLLLYLVRMGSFNSAPKINNVDSQDDGLVLPSGLSTPALLQHVQQLRGGGIEQPSLLTRGFLKPLLADEDVADGLRCLKLNSVSRVCSAPVEGDDIRLLQWNILSQTLGQHNDGFVRCPEEALTWEHRKYLIVQEILQNQPDVICLQEVDHFKFLQTVLGSQNYAGIFFPKPDSPCLYIEQNNGPDGCAIFYKRDKLQLQGYDTRILEVWRVQSNQVAIAARLRMRSSGREFCVATTHLKARHGALLAKLRNEQGRDLIRFVKQFAGDTPLLLCGDFNAEPVEPIYATILGCDLLRLGSAYADVKLDREEILHPNADVGEFVAKSMKREPPYTTWKIREEGEECHTIDYVFYTPDRLKIKNCLDFPAGEQIGKNRTPSFQYPSDHFSLVCDFELLPPTENGKESGSGSGSDGENETEVEGSKHGSIQ.

Positions L50–A87 are disordered. The segment covering E72 to A87 has biased composition (basic and acidic residues). Residue E363 participates in Mg(2+) binding. Residues E363, N430, H453–A456, D491–N493, and H600 each bind substrate. Residues P611–Q642 are disordered.

This sequence belongs to the CCR4/nocturin family. Associates to the CCR4-NOT complex composed of at least Pop2/Caf1-55, Ccr4, Not1, Rga/Not2, and Not3. Requires Mg(2+) as cofactor. As to expression, expressed in the head, in the dorsal neurons DN3, a subgroup of clock neurons (at protein level). Ubiquitously expressed in both males and females.

Its subcellular location is the cytoplasm. It catalyses the reaction NADP(+) + H2O = phosphate + NAD(+). The enzyme catalyses NADPH + H2O = phosphate + NADH. In terms of biological role, phosphatase which catalyzes the conversion of NADP(+) to NAD(+) and of NADPH to NADH. Shows a small preference for NADPH over NADP(+). Because of its association with the CCR4-NOT complex, has a role in mRNA deadenylation and decay. Required at the pupal stage for proper wing morphogenesis after eclosion. Doesn't have a role in light-mediated behavioral response. Its function is as follows. In dorsal neurons, contributes to the light-mediated behavioral response. This chain is Nocturnin, found in Drosophila melanogaster (Fruit fly).